Here is a 451-residue protein sequence, read N- to C-terminus: Serine--tRNA ligase (451 aa).

247–249 (TAE) serves as a coordination point for L-serine. Residues 278 to 280 (RKE) and Val-294 contribute to the ATP site. Residue Glu-301 coordinates L-serine. 365–368 (ELAS) is a binding site for ATP. L-serine is bound at residue Thr-400.

This sequence belongs to the class-II aminoacyl-tRNA synthetase family. Type-1 seryl-tRNA synthetase subfamily. As to quaternary structure, homodimer. The tRNA molecule binds across the dimer.

The protein resides in the cytoplasm. The enzyme catalyses tRNA(Ser) + L-serine + ATP = L-seryl-tRNA(Ser) + AMP + diphosphate + H(+). It catalyses the reaction tRNA(Sec) + L-serine + ATP = L-seryl-tRNA(Sec) + AMP + diphosphate + H(+). The protein operates within aminoacyl-tRNA biosynthesis; selenocysteinyl-tRNA(Sec) biosynthesis; L-seryl-tRNA(Sec) from L-serine and tRNA(Sec): step 1/1. Its function is as follows. Catalyzes the attachment of serine to tRNA(Ser). Is also able to aminoacylate tRNA(Sec) with serine, to form the misacylated tRNA L-seryl-tRNA(Sec), which will be further converted into selenocysteinyl-tRNA(Sec). The sequence is that of Serine--tRNA ligase from Pyrobaculum aerophilum (strain ATCC 51768 / DSM 7523 / JCM 9630 / CIP 104966 / NBRC 100827 / IM2).